A 67-amino-acid polypeptide reads, in one-letter code: MPKLKTNRAAAKRFKFTKNNKIKRKSMNTRHILTKKGPKRRRRLRGLTLVNNSDWKSIVRLMPYGVR.

This sequence belongs to the bacterial ribosomal protein bL35 family.

The polypeptide is Large ribosomal subunit protein bL35 (Leptospira borgpetersenii serovar Hardjo-bovis (strain JB197)).